Reading from the N-terminus, the 335-residue chain is Holliday junction branch migration complex subunit RuvB (335 aa).

The segment at 1-183 is large ATPase domain (RuvB-L); the sequence is MDERIISSET…FGVIDHLEFY (183 aa). ATP is bound by residues leucine 22, arginine 23, glycine 64, lysine 67, threonine 68, threonine 69, 130–132, arginine 173, tyrosine 183, and arginine 220; that span reads EDY. Threonine 68 contributes to the Mg(2+) binding site. The small ATPAse domain (RuvB-S) stretch occupies residues 184–254; sequence TEEQLTEIVL…LAKEALTLLQ (71 aa). The tract at residues 257–335 is head domain (RuvB-H); the sequence is PRGLDTIDQK…HLGISYEKEV (79 aa). 3 residues coordinate DNA: arginine 293, arginine 312, and arginine 317.

It belongs to the RuvB family. Homohexamer. Forms an RuvA(8)-RuvB(12)-Holliday junction (HJ) complex. HJ DNA is sandwiched between 2 RuvA tetramers; dsDNA enters through RuvA and exits via RuvB. An RuvB hexamer assembles on each DNA strand where it exits the tetramer. Each RuvB hexamer is contacted by two RuvA subunits (via domain III) on 2 adjacent RuvB subunits; this complex drives branch migration. In the full resolvosome a probable DNA-RuvA(4)-RuvB(12)-RuvC(2) complex forms which resolves the HJ.

It is found in the cytoplasm. It carries out the reaction ATP + H2O = ADP + phosphate + H(+). Functionally, the RuvA-RuvB-RuvC complex processes Holliday junction (HJ) DNA during genetic recombination and DNA repair, while the RuvA-RuvB complex plays an important role in the rescue of blocked DNA replication forks via replication fork reversal (RFR). RuvA specifically binds to HJ cruciform DNA, conferring on it an open structure. The RuvB hexamer acts as an ATP-dependent pump, pulling dsDNA into and through the RuvAB complex. RuvB forms 2 homohexamers on either side of HJ DNA bound by 1 or 2 RuvA tetramers; 4 subunits per hexamer contact DNA at a time. Coordinated motions by a converter formed by DNA-disengaged RuvB subunits stimulates ATP hydrolysis and nucleotide exchange. Immobilization of the converter enables RuvB to convert the ATP-contained energy into a lever motion, pulling 2 nucleotides of DNA out of the RuvA tetramer per ATP hydrolyzed, thus driving DNA branch migration. The RuvB motors rotate together with the DNA substrate, which together with the progressing nucleotide cycle form the mechanistic basis for DNA recombination by continuous HJ branch migration. Branch migration allows RuvC to scan DNA until it finds its consensus sequence, where it cleaves and resolves cruciform DNA. This Listeria welshimeri serovar 6b (strain ATCC 35897 / DSM 20650 / CCUG 15529 / CIP 8149 / NCTC 11857 / SLCC 5334 / V8) protein is Holliday junction branch migration complex subunit RuvB.